A 637-amino-acid polypeptide reads, in one-letter code: PTS system mannitol-specific EIICBA component (637 aa).

Over 1–23 (MSSDIKIKVQSFGRFLSNMVMPN) the chain is Cytoplasmic. The 330-residue stretch at 12–341 (FGRFLSNMVM…ILLKTSKVKE (330 aa)) folds into the PTS EIIC type-2 domain. Residues 24-45 (IGAFIAWGIITALFIPTGWLPN) traverse the membrane as a helical segment. Over 46–49 (ETLA) the chain is Periplasmic. Residues 50–70 (KLVGPMITYLLPLLIGYTGGK) form a helical membrane-spanning segment. Residues 71–133 (LVGGERGGVV…SGFEMLVNNF (63 aa)) are Cytoplasmic-facing. A helical membrane pass occupies residues 134 to 155 (SAGIIGMILAILAFLGIGPIVE). Residues 156–164 (ALSKMLAAG) lie on the Periplasmic side of the membrane. A helical transmembrane segment spans residues 165–185 (VNFMVVHDMLPLASIFVEPAK). At 186–272 (ILFLNNAINH…VLMNPRLILA (87 aa)) the chain is on the cytoplasmic side. The chain crosses the membrane as a helical span at residues 273 to 292 (VILGGMTGVFTLTILGGGLV). The Periplasmic segment spans residues 293–312 (SPASPGSILAVLAMTPKGAY). Residues 313–334 (FANIAGVCAAMAVSFVVSAILL) traverse the membrane as a helical segment. Over 335–637 (KTSKVKEEDD…EVLELLAGRK (303 aa)) the chain is Cytoplasmic. Residues 378–473 (RKIIVACDAG…RLVAAQRHTA (96 aa)) form the PTS EIIB type-2 domain. C384 functions as the Phosphocysteine intermediate; for EIIB activity in the catalytic mechanism. A Phosphocysteine; by EIIA modification is found at C384. One can recognise a PTS EIIA type-2 domain in the interval 494-636 (FKLGAENIFL…DEVLELLAGR (143 aa)). H554 serves as the catalytic Tele-phosphohistidine intermediate; for EIIA activity. H554 is modified (phosphohistidine; by HPr).

As to quaternary structure, homodimer. Post-translationally, an intramolecular phosphotransfer takes places between His-554 and Cys-384.

The protein localises to the cell inner membrane. The enzyme catalyses D-mannitol(out) + N(pros)-phospho-L-histidyl-[protein] = D-mannitol 1-phosphate(in) + L-histidyl-[protein]. Functionally, the phosphoenolpyruvate-dependent sugar phosphotransferase system (sugar PTS), a major carbohydrate active transport system, catalyzes the phosphorylation of incoming sugar substrates concomitantly with their translocation across the cell membrane. This system is involved in D-mannitol transport. Also able to use D-mannonic acid. The chain is PTS system mannitol-specific EIICBA component from Escherichia coli (strain K12).